A 202-amino-acid chain; its full sequence is Large ribosomal subunit protein uL5 (202 aa).

Over residues 1–17 the composition is skewed to low complexity; that stretch reads MSAKAATKNATKVAVKA. The interval 1 to 30 is disordered; that stretch reads MSAKAATKNATKVAVKAPEATTPVETKKSK.

The protein belongs to the universal ribosomal protein uL5 family. As to quaternary structure, component of the large ribosomal subunit.

It localises to the nucleus. It is found in the cytoplasm. Functionally, component of the ribosome, a large ribonucleoprotein complex responsible for the synthesis of proteins in the cell. The small ribosomal subunit (SSU) binds messenger RNAs (mRNAs) and translates the encoded message by selecting cognate aminoacyl-transfer RNA (tRNA) molecules. The large subunit (LSU) contains the ribosomal catalytic site termed the peptidyl transferase center (PTC), which catalyzes the formation of peptide bonds, thereby polymerizing the amino acids delivered by tRNAs into a polypeptide chain. The nascent polypeptides leave the ribosome through a tunnel in the LSU and interact with protein factors that function in enzymatic processing, targeting, and the membrane insertion of nascent chains at the exit of the ribosomal tunnel. The sequence is that of Large ribosomal subunit protein uL5 (rpl11) from Dictyostelium discoideum (Social amoeba).